We begin with the raw amino-acid sequence, 505 residues long: Lysine--tRNA ligase (505 aa).

Residues Glu415 and Glu422 each contribute to the Mg(2+) site.

It belongs to the class-II aminoacyl-tRNA synthetase family. In terms of assembly, homodimer. The cofactor is Mg(2+).

It is found in the cytoplasm. The catalysed reaction is tRNA(Lys) + L-lysine + ATP = L-lysyl-tRNA(Lys) + AMP + diphosphate. The chain is Lysine--tRNA ligase from Vibrio parahaemolyticus serotype O3:K6 (strain RIMD 2210633).